The primary structure comprises 919 residues: Chaperone protein ClpC2, chloroplastic (919 aa).

A chloroplast-targeting transit peptide spans 1–54 (MAGTLLQPVALGTTFAGRVSGQRWKSHGTRRPPSMLAMSLSRPVKMAAFVGLRS). In terms of domain architecture, Clp R spans 89-231 (FERFTEKAIK…RTQVIRMIGE (143 aa)). Repeat stretches follow at residues 92–157 (FTEK…IGRG) and 167–231 (FTPR…MIGE). The segment at 252–499 (LEEYGTNLTK…RVRLRHAQVP (248 aa)) is i. 297 to 304 (GEPGVGKT) contributes to the ATP binding site. The 36-residue stretch at 506–541 (DKELKQITKDKNEAVRSQDFEKAGELRDREMELKAQ) folds into the UVR domain. Residues 566–757 (VNEADIQHIV…LLIMTSNVGS (192 aa)) form an II region. Position 640-647 (640-647 (GPTGVGKS)) interacts with ATP.

It belongs to the ClpA/ClpB family. ClpC subfamily.

The protein resides in the plastid. It localises to the chloroplast. Functionally, molecular chaperone that may interact with a ClpP-like protease involved in degradation of denatured proteins in the chloroplast. The protein is Chaperone protein ClpC2, chloroplastic (CLPC2) of Oryza sativa subsp. japonica (Rice).